We begin with the raw amino-acid sequence, 170 residues long: Adenine phosphoribosyltransferase (170 aa).

This sequence belongs to the purine/pyrimidine phosphoribosyltransferase family. Homodimer.

It is found in the cytoplasm. The enzyme catalyses AMP + diphosphate = 5-phospho-alpha-D-ribose 1-diphosphate + adenine. It functions in the pathway purine metabolism; AMP biosynthesis via salvage pathway; AMP from adenine: step 1/1. In terms of biological role, catalyzes a salvage reaction resulting in the formation of AMP, that is energically less costly than de novo synthesis. The polypeptide is Adenine phosphoribosyltransferase (Nitrosopumilus maritimus (strain SCM1)).